The primary structure comprises 244 residues: 1-(5-phosphoribosyl)-5-[(5-phosphoribosylamino)methylideneamino] imidazole-4-carboxamide isomerase (244 aa).

Catalysis depends on Asp-10, which acts as the Proton acceptor. Asp-132 functions as the Proton donor in the catalytic mechanism.

It belongs to the HisA/HisF family.

It localises to the cytoplasm. It catalyses the reaction 1-(5-phospho-beta-D-ribosyl)-5-[(5-phospho-beta-D-ribosylamino)methylideneamino]imidazole-4-carboxamide = 5-[(5-phospho-1-deoxy-D-ribulos-1-ylimino)methylamino]-1-(5-phospho-beta-D-ribosyl)imidazole-4-carboxamide. The protein operates within amino-acid biosynthesis; L-histidine biosynthesis; L-histidine from 5-phospho-alpha-D-ribose 1-diphosphate: step 4/9. The protein is 1-(5-phosphoribosyl)-5-[(5-phosphoribosylamino)methylideneamino] imidazole-4-carboxamide isomerase of Stenotrophomonas maltophilia (strain K279a).